The following is a 273-amino-acid chain: tRNA pseudouridine synthase B (273 aa).

Catalysis depends on aspartate 38, which acts as the Nucleophile.

This sequence belongs to the pseudouridine synthase TruB family. Type 1 subfamily.

The enzyme catalyses uridine(55) in tRNA = pseudouridine(55) in tRNA. Responsible for synthesis of pseudouridine from uracil-55 in the psi GC loop of transfer RNAs. The protein is tRNA pseudouridine synthase B of Sulfurimonas denitrificans (strain ATCC 33889 / DSM 1251) (Thiomicrospira denitrificans (strain ATCC 33889 / DSM 1251)).